Reading from the N-terminus, the 284-residue chain is 4-hydroxybenzoate octaprenyltransferase (284 aa).

Transmembrane regions (helical) follow at residues 19–39, 42–62, 93–113, 114–134, 136–156, 158–178, 210–230, 233–253, and 264–284; these read IGSLLLLWPTLWALLLAAQGL, LRVLVVFVLGVFLMRSAGCVI, LLLFVLLAVSSFLLVLTMNTL, TIQLSFIGILLAFVYPFMKRF, HLPQLVLGLAFSWSIPMAWAA, ANTLTPQVWVLFLINALWTIA, IIGLLQLATLSLLVALGQGLA, TSYYWGLLIAAGLFAYQQHLI, and AFLNNNYVGMAITAGILLSVW.

The protein belongs to the UbiA prenyltransferase family. Requires Mg(2+) as cofactor.

The protein resides in the cell inner membrane. It catalyses the reaction all-trans-octaprenyl diphosphate + 4-hydroxybenzoate = 4-hydroxy-3-(all-trans-octaprenyl)benzoate + diphosphate. It participates in cofactor biosynthesis; ubiquinone biosynthesis. In terms of biological role, catalyzes the prenylation of para-hydroxybenzoate (PHB) with an all-trans polyprenyl group. Mediates the second step in the final reaction sequence of ubiquinone-8 (UQ-8) biosynthesis, which is the condensation of the polyisoprenoid side chain with PHB, generating the first membrane-bound Q intermediate 3-octaprenyl-4-hydroxybenzoate. This Vibrio cholerae serotype O1 (strain ATCC 39541 / Classical Ogawa 395 / O395) protein is 4-hydroxybenzoate octaprenyltransferase.